The chain runs to 91 residues: Small ribosomal subunit protein uS19 (91 aa).

The protein belongs to the universal ribosomal protein uS19 family.

In terms of biological role, protein S19 forms a complex with S13 that binds strongly to the 16S ribosomal RNA. The protein is Small ribosomal subunit protein uS19 of Colwellia psychrerythraea (strain 34H / ATCC BAA-681) (Vibrio psychroerythus).